The following is a 968-amino-acid chain: Leucine--tRNA ligase (968 aa).

The span at 1-13 shows a compositional bias: polar residues; the sequence is MTETPTGTQSSRE. The interval 1–22 is disordered; sequence MTETPTGTQSSRETAADDTPRH. The short motif at 75-86 is the 'HIGH' region element; it reads PYPSGEGLHVGH. A 'KMSKS' region motif is present at residues 741-745; that stretch reads KIGKS. Position 744 (Lys744) interacts with ATP.

It belongs to the class-I aminoacyl-tRNA synthetase family.

The protein resides in the cytoplasm. The enzyme catalyses tRNA(Leu) + L-leucine + ATP = L-leucyl-tRNA(Leu) + AMP + diphosphate. The protein is Leucine--tRNA ligase of Mycolicibacterium vanbaalenii (strain DSM 7251 / JCM 13017 / BCRC 16820 / KCTC 9966 / NRRL B-24157 / PYR-1) (Mycobacterium vanbaalenii).